Consider the following 349-residue polypeptide: Anthranilate phosphoribosyltransferase (349 aa).

5-phospho-alpha-D-ribose 1-diphosphate-binding positions include G82, G85–D86, N92–T95, K110–G118, and S122. G82 contributes to the anthranilate binding site. S94 is a Mg(2+) binding site. N113 is an anthranilate binding site. R168 contributes to the anthranilate binding site. Positions 227 and 228 each coordinate Mg(2+).

This sequence belongs to the anthranilate phosphoribosyltransferase family. Homodimer. The cofactor is Mg(2+).

The enzyme catalyses N-(5-phospho-beta-D-ribosyl)anthranilate + diphosphate = 5-phospho-alpha-D-ribose 1-diphosphate + anthranilate. The protein operates within amino-acid biosynthesis; L-tryptophan biosynthesis; L-tryptophan from chorismate: step 2/5. Catalyzes the transfer of the phosphoribosyl group of 5-phosphorylribose-1-pyrophosphate (PRPP) to anthranilate to yield N-(5'-phosphoribosyl)-anthranilate (PRA). The polypeptide is Anthranilate phosphoribosyltransferase (Pseudomonas putida (strain ATCC 47054 / DSM 6125 / CFBP 8728 / NCIMB 11950 / KT2440)).